Reading from the N-terminus, the 570-residue chain is Urease subunit alpha 1 (570 aa).

Residues 131–570 (GGIDTHVHFI…VPMAQRYFLF (440 aa)) form the Urease domain. The Ni(2+) site is built by His-136, His-138, and Lys-219. The residue at position 219 (Lys-219) is an N6-carboxylysine. Substrate is bound at residue His-221. Positions 248 and 274 each coordinate Ni(2+). The active-site Proton donor is the His-322. Asp-362 is a binding site for Ni(2+).

This sequence belongs to the metallo-dependent hydrolases superfamily. Urease alpha subunit family. As to quaternary structure, heterotrimer of UreA (gamma), UreB (beta) and UreC (alpha) subunits. Three heterotrimers associate to form the active enzyme. Ni cation is required as a cofactor. Post-translationally, carboxylation allows a single lysine to coordinate two nickel ions.

Its subcellular location is the cytoplasm. The catalysed reaction is urea + 2 H2O + H(+) = hydrogencarbonate + 2 NH4(+). It participates in nitrogen metabolism; urea degradation; CO(2) and NH(3) from urea (urease route): step 1/1. May protect brucellae during their passage through the stomach. The major route of infection in human brucellosis is oral. This chain is Urease subunit alpha 1, found in Brucella abortus (strain 2308).